Reading from the N-terminus, the 447-residue chain is Adenylosuccinate synthetase (447 aa).

GTP-binding positions include 12–18 (GDEGKGK) and 40–42 (GHT). The Proton acceptor role is filled by aspartate 13. Mg(2+) contacts are provided by aspartate 13 and glycine 40. IMP contacts are provided by residues 13–16 (DEGK), 38–41 (NAGH), threonine 128, arginine 142, glutamine 223, threonine 238, and arginine 302. Histidine 41 acts as the Proton donor in catalysis. 298-304 (TTTGRRR) is a binding site for substrate. GTP contacts are provided by residues arginine 304, 330–332 (KLD), and 412–414 (SLG).

It belongs to the adenylosuccinate synthetase family. Homodimer. The cofactor is Mg(2+).

It is found in the cytoplasm. It carries out the reaction IMP + L-aspartate + GTP = N(6)-(1,2-dicarboxyethyl)-AMP + GDP + phosphate + 2 H(+). Its pathway is purine metabolism; AMP biosynthesis via de novo pathway; AMP from IMP: step 1/2. Plays an important role in the de novo pathway of purine nucleotide biosynthesis. Catalyzes the first committed step in the biosynthesis of AMP from IMP. In Microcystis aeruginosa (strain NIES-843 / IAM M-2473), this protein is Adenylosuccinate synthetase.